Consider the following 254-residue polypeptide: MIIVISPAKSQNFEPIKTAYQFTQPIFKQQIIKLINTLKYYEVEEIEKLMKISPKLAEEVFAKHNSFNPNKYDNSNAKAAIFTFSGDVYKGLEADTLDNKTIEYAQNHLLMLSGLYGLVRPLDLIQAYRLEMGTNIKIDGKILHKYWQDKITTQLNEYFSQQQNKILINLASNEYSQAIDKKSLAVKWLDIDFKENKAGAYKTIGIHAKKARGLMTRYILENRIENVSDIKKFNVAGYQFNPDFSDENLLCFTR.

This sequence belongs to the UPF0246 family.

This chain is UPF0246 protein FTF1693c, found in Francisella tularensis subsp. tularensis (strain FSC 198).